Reading from the N-terminus, the 239-residue chain is Ribosomal RNA small subunit methyltransferase G (239 aa).

S-adenosyl-L-methionine is bound by residues glycine 79, phenylalanine 84, 130-131, and arginine 149; that span reads AE. The span at 218-227 shows a compositional bias: basic residues; that stretch reads KHKKTPKKYP. Residues 218–239 are disordered; the sequence is KHKKTPKKYPRQAGTPNKKPIA.

The protein belongs to the methyltransferase superfamily. RNA methyltransferase RsmG family.

Its subcellular location is the cytoplasm. Specifically methylates the N7 position of a guanine in 16S rRNA. This chain is Ribosomal RNA small subunit methyltransferase G, found in Leuconostoc citreum (strain KM20).